The sequence spans 180 residues: Crossover junction endodeoxyribonuclease RuvC (180 aa).

Residues Asp7, Glu66, and Asp138 contribute to the active site. The Mg(2+) site is built by Asp7, Glu66, and Asp138.

It belongs to the RuvC family. Homodimer which binds Holliday junction (HJ) DNA. The HJ becomes 2-fold symmetrical on binding to RuvC with unstacked arms; it has a different conformation from HJ DNA in complex with RuvA. In the full resolvosome a probable DNA-RuvA(4)-RuvB(12)-RuvC(2) complex forms which resolves the HJ. It depends on Mg(2+) as a cofactor.

It is found in the cytoplasm. It catalyses the reaction Endonucleolytic cleavage at a junction such as a reciprocal single-stranded crossover between two homologous DNA duplexes (Holliday junction).. In terms of biological role, the RuvA-RuvB-RuvC complex processes Holliday junction (HJ) DNA during genetic recombination and DNA repair. Endonuclease that resolves HJ intermediates. Cleaves cruciform DNA by making single-stranded nicks across the HJ at symmetrical positions within the homologous arms, yielding a 5'-phosphate and a 3'-hydroxyl group; requires a central core of homology in the junction. The consensus cleavage sequence is 5'-(A/T)TT(C/G)-3'. Cleavage occurs on the 3'-side of the TT dinucleotide at the point of strand exchange. HJ branch migration catalyzed by RuvA-RuvB allows RuvC to scan DNA until it finds its consensus sequence, where it cleaves and resolves the cruciform DNA. This is Crossover junction endodeoxyribonuclease RuvC from Paraburkholderia xenovorans (strain LB400).